We begin with the raw amino-acid sequence, 297 residues long: Small ribosomal subunit protein uS2 (297 aa).

A disordered region spans residues 252–297 (GVPGTAFSAATAAPTSWEADGGDWAASSAAPAGESWAETQPAEAKW). Residues 256–289 (TAFSAATAAPTSWEADGGDWAASSAAPAGESWAE) are compositionally biased toward low complexity.

The protein belongs to the universal ribosomal protein uS2 family. In terms of assembly, component of the small ribosomal subunit. Mature ribosomes consist of a small (40S) and a large (60S) subunit. The 40S subunit contains about 33 different proteins and 1 molecule of RNA (18S). The 60S subunit contains about 49 different proteins and 3 molecules of RNA (25S, 5.8S and 5S). Interacts with rps21.

It localises to the cytoplasm. In terms of biological role, required for the assembly and/or stability of the 40S ribosomal subunit. Required for the processing of the 20S rRNA-precursor to mature 18S rRNA in a late step of the maturation of 40S ribosomal subunits. This Aspergillus fumigatus (strain CBS 144.89 / FGSC A1163 / CEA10) (Neosartorya fumigata) protein is Small ribosomal subunit protein uS2 (rps0).